A 177-amino-acid chain; its full sequence is Negative modulator of initiation of replication (177 aa).

It belongs to the SeqA family. In terms of assembly, homodimer. Polymerizes to form helical filaments.

Its subcellular location is the cytoplasm. Negative regulator of replication initiation, which contributes to regulation of DNA replication and ensures that replication initiation occurs exactly once per chromosome per cell cycle. Binds to pairs of hemimethylated GATC sequences in the oriC region, thus preventing assembly of replication proteins and re-initiation at newly replicated origins. Repression is relieved when the region becomes fully methylated. In Vibrio cholerae serotype O1 (strain ATCC 39315 / El Tor Inaba N16961), this protein is Negative modulator of initiation of replication.